An 877-amino-acid chain; its full sequence is Alanine--tRNA ligase (877 aa).

Positions 562, 566, 664, and 668 each coordinate Zn(2+).

The protein belongs to the class-II aminoacyl-tRNA synthetase family. It depends on Zn(2+) as a cofactor.

The protein resides in the cytoplasm. The catalysed reaction is tRNA(Ala) + L-alanine + ATP = L-alanyl-tRNA(Ala) + AMP + diphosphate. Catalyzes the attachment of alanine to tRNA(Ala) in a two-step reaction: alanine is first activated by ATP to form Ala-AMP and then transferred to the acceptor end of tRNA(Ala). Also edits incorrectly charged Ser-tRNA(Ala) and Gly-tRNA(Ala) via its editing domain. The protein is Alanine--tRNA ligase of Synechocystis sp. (strain ATCC 27184 / PCC 6803 / Kazusa).